We begin with the raw amino-acid sequence, 852 residues long: Protein SBE22 (852 aa).

The segment at 1 to 158 (MTSIQERGTS…ADKSKINTFP (158 aa)) is disordered. Over residues 15-26 (SLKEGEASDRSS) the composition is skewed to basic and acidic residues. The segment covering 43–61 (PPSQTTLGRSRAGSNTMNK) has biased composition (polar residues). Ser-72 is modified (phosphoserine). Polar residues predominate over residues 74 to 96 (NLLSNMNCSDNGNGGNMLNSFVN). Positions 124–139 (TTEVFSSTSASSSLGD) are enriched in low complexity. Phosphoserine is present on Ser-201. Residues 206–248 (AAEKTMNKSRHSYQEQFSSKKSQSSLLNSKQRSRAKSQTCSST) form a disordered region. Low complexity predominate over residues 224 to 235 (SKKSQSSLLNSK). Ser-459, Ser-517, and Ser-520 each carry phosphoserine.

Belongs to the SBE2 family.

Its subcellular location is the cytoplasm. It localises to the golgi apparatus. With SBE2, is involved in cell wall integrity and polarity processes like bud growth, through the transport of CHS3 and UTR2 to sites of growth. This chain is Protein SBE22 (SBE22), found in Saccharomyces cerevisiae (strain YJM789) (Baker's yeast).